A 130-amino-acid chain; its full sequence is Small ribosomal subunit protein uS9 (130 aa).

This sequence belongs to the universal ribosomal protein uS9 family.

The sequence is that of Small ribosomal subunit protein uS9 from Albidiferax ferrireducens (strain ATCC BAA-621 / DSM 15236 / T118) (Rhodoferax ferrireducens).